Reading from the N-terminus, the 240-residue chain is Ribosomal RNA small subunit methyltransferase G (240 aa).

Residues glycine 79, phenylalanine 84, 130 to 131, and arginine 149 contribute to the S-adenosyl-L-methionine site; that span reads AE.

This sequence belongs to the methyltransferase superfamily. RNA methyltransferase RsmG family.

The protein localises to the cytoplasm. Functionally, specifically methylates the N7 position of a guanine in 16S rRNA. This is Ribosomal RNA small subunit methyltransferase G from Lactobacillus helveticus (strain DPC 4571).